The sequence spans 501 residues: ATP synthase subunit alpha (501 aa).

169-176 provides a ligand contact to ATP; that stretch reads GDRQTGKT.

Belongs to the ATPase alpha/beta chains family. F-type ATPases have 2 components, CF(1) - the catalytic core - and CF(0) - the membrane proton channel. CF(1) has five subunits: alpha(3), beta(3), gamma(1), delta(1), epsilon(1). CF(0) has three main subunits: a(1), b(2) and c(9-12). The alpha and beta chains form an alternating ring which encloses part of the gamma chain. CF(1) is attached to CF(0) by a central stalk formed by the gamma and epsilon chains, while a peripheral stalk is formed by the delta and b chains.

It is found in the cell membrane. It catalyses the reaction ATP + H2O + 4 H(+)(in) = ADP + phosphate + 5 H(+)(out). Functionally, produces ATP from ADP in the presence of a proton gradient across the membrane. The alpha chain is a regulatory subunit. The sequence is that of ATP synthase subunit alpha from Desulforamulus reducens (strain ATCC BAA-1160 / DSM 100696 / MI-1) (Desulfotomaculum reducens).